The primary structure comprises 226 residues: ATP synthase F(0) complex subunit a (226 aa).

Helical transmembrane passes span 5-25, 68-88, 97-117, 136-156, 179-199, and 201-221; these read LFAP…LIII, WSLM…LGML, QLSM…ATGF, FLIP…PVAL, LVLM…LALL, and ILEF…VSLY.

The protein belongs to the ATPase A chain family. Component of the ATP synthase complex composed at least of ATP5F1A/subunit alpha, ATP5F1B/subunit beta, ATP5MC1/subunit c (homooctomer), MT-ATP6/subunit a, MT-ATP8/subunit 8, ATP5ME/subunit e, ATP5MF/subunit f, ATP5MG/subunit g, ATP5MK/subunit k, ATP5MJ/subunit j, ATP5F1C/subunit gamma, ATP5F1D/subunit delta, ATP5F1E/subunit epsilon, ATP5PF/subunit F6, ATP5PB/subunit b, ATP5PD/subunit d, ATP5PO/subunit OSCP. ATP synthase complex consists of a soluble F(1) head domain (subunits alpha(3) and beta(3)) - the catalytic core - and a membrane F(0) domain - the membrane proton channel (subunits c, a, 8, e, f, g, k and j). These two domains are linked by a central stalk (subunits gamma, delta, and epsilon) rotating inside the F1 region and a stationary peripheral stalk (subunits F6, b, d, and OSCP). Interacts with DNAJC30; interaction is direct.

The protein localises to the mitochondrion inner membrane. It carries out the reaction H(+)(in) = H(+)(out). Its function is as follows. Subunit a, of the mitochondrial membrane ATP synthase complex (F(1)F(0) ATP synthase or Complex V) that produces ATP from ADP in the presence of a proton gradient across the membrane which is generated by electron transport complexes of the respiratory chain. ATP synthase complex consist of a soluble F(1) head domain - the catalytic core - and a membrane F(1) domain - the membrane proton channel. These two domains are linked by a central stalk rotating inside the F(1) region and a stationary peripheral stalk. During catalysis, ATP synthesis in the catalytic domain of F(1) is coupled via a rotary mechanism of the central stalk subunits to proton translocation. With the subunit c (ATP5MC1), forms the proton-conducting channel in the F(0) domain, that contains two crucial half-channels (inlet and outlet) that facilitate proton movement from the mitochondrial intermembrane space (IMS) into the matrix. Protons are taken up via the inlet half-channel and released through the outlet half-channel, following a Grotthuss mechanism. The sequence is that of ATP synthase F(0) complex subunit a from Balaenoptera musculus (Blue whale).